Here is a 1190-residue protein sequence, read N- to C-terminus: DNA-directed RNA polymerase subunit beta (1190 aa).

Belongs to the RNA polymerase beta chain family. As to quaternary structure, the RNAP catalytic core consists of 2 alpha, 1 beta, 1 beta' and 1 omega subunit. When a sigma factor is associated with the core the holoenzyme is formed, which can initiate transcription.

The enzyme catalyses RNA(n) + a ribonucleoside 5'-triphosphate = RNA(n+1) + diphosphate. Its function is as follows. DNA-dependent RNA polymerase catalyzes the transcription of DNA into RNA using the four ribonucleoside triphosphates as substrates. This Streptococcus suis (strain 98HAH33) protein is DNA-directed RNA polymerase subunit beta.